The chain runs to 105 residues: Heat shock protein HspQ (105 aa).

The segment at 84-105 is disordered; that stretch reads QPKLDELSASIKKQLKTPRLRN. Basic residues predominate over residues 96–105; that stretch reads KQLKTPRLRN.

This sequence belongs to the HspQ family.

The protein localises to the cytoplasm. Involved in the degradation of certain denaturated proteins, including DnaA, during heat shock stress. The polypeptide is Heat shock protein HspQ (Wigglesworthia glossinidia brevipalpis).